Here is a 302-residue protein sequence, read N- to C-terminus: Troponin T, cardiac muscle isoforms (302 aa).

Residues 1–55 are compositionally biased toward acidic residues; sequence MSDSEEVVEEYEQEQEEEYVEEEEEEWLEEDDGQEDQVDEEEEETEETTAEEQED. Disordered regions lie at residues 1–99, 138–230, and 280–302; these read MSDS…GERL, KDRI…RKPL, and SDHQKVKGSKAARGKTMVGGRWK. An N-acetylserine modification is found at serine 2. Serine 2 carries the phosphoserine; by CK2 modification. The span at 65-79 shows a compositional bias: basic and acidic residues; that stretch reads EGDREQEPGEGESKP. The segment covering 82 to 93 has biased composition (pro residues); sequence KPFMPNLVPPKI. Basic and acidic residues-rich tracts occupy residues 138 to 186 and 204 to 230; these read KDRI…EKEA and KSEKKGGKKQTEREKKKKILSERRKPL.

Belongs to the troponin T family.

Functionally, troponin T is the tropomyosin-binding subunit of troponin, the thin filament regulatory complex which confers calcium-sensitivity to striated muscle actomyosin ATPase activity. In Gallus gallus (Chicken), this protein is Troponin T, cardiac muscle isoforms (TNNT2).